The following is a 408-amino-acid chain: DNA-directed RNA polymerase subunit Rpo1C (408 aa).

Belongs to the RNA polymerase beta' chain family. Part of the RNA polymerase complex.

Its subcellular location is the cytoplasm. The enzyme catalyses RNA(n) + a ribonucleoside 5'-triphosphate = RNA(n+1) + diphosphate. Its function is as follows. DNA-dependent RNA polymerase (RNAP) catalyzes the transcription of DNA into RNA using the four ribonucleoside triphosphates as substrates. Forms part of the jaw domain. In Methanosarcina mazei (strain ATCC BAA-159 / DSM 3647 / Goe1 / Go1 / JCM 11833 / OCM 88) (Methanosarcina frisia), this protein is DNA-directed RNA polymerase subunit Rpo1C.